An 817-amino-acid polypeptide reads, in one-letter code: Leucine--tRNA ligase (817 aa).

Positions 42-52 (PYPSGKLHMGH) match the 'HIGH' region motif. Residues 576–580 (KMSKS) carry the 'KMSKS' region motif. Lysine 579 serves as a coordination point for ATP.

It belongs to the class-I aminoacyl-tRNA synthetase family.

Its subcellular location is the cytoplasm. The enzyme catalyses tRNA(Leu) + L-leucine + ATP = L-leucyl-tRNA(Leu) + AMP + diphosphate. This chain is Leucine--tRNA ligase, found in Methylobacillus flagellatus (strain ATCC 51484 / DSM 6875 / VKM B-1610 / KT).